The primary structure comprises 67 residues: Large ribosomal subunit protein uL29 (67 aa).

This sequence belongs to the universal ribosomal protein uL29 family.

The polypeptide is Large ribosomal subunit protein uL29 (Ruminiclostridium cellulolyticum (strain ATCC 35319 / DSM 5812 / JCM 6584 / H10) (Clostridium cellulolyticum)).